Consider the following 614-residue polypeptide: MDELSDEELAQFCQIANLAYRAGKPIISDQDYDFIYLDALKNRDPDNLLFKFIETEGQSFSEEKVLLPEAMLSIDKAYSWDEISKWIKRLEKSAMQISLDLSAIQIKATPKLDGFSGFDDGSRLYTRGDGKKGSDISRVFERGLCVFNDAERGLGAGEIVIKKSYFKKYLAHSFEYPRNFQASLIKEKALDEQAQKAIIDKAALFIPFIKLPTWSGLVAELVAKFDQIVAQVLVMVDFDVDGVVFEAINTDLKTQMGANRKFHRWQIAFKENKDKAHVKVLNVIPQVGRSGKITPVVELEPTLLSGATIMRATGHNYGLVKEQGLGVGSVVELTRSGLVIPKIIFVLKPMPVDIPDNCPSCDKPLVWKSDFLTCINHKNCPAQIIGKMAYFFKILANNDGFGIATIEKLYAHDIRSVSQIYALNIEDLVTIGFGEKTSMNLINQLNRSVSEQVEDWRFLAAFGMHRMGLGNCENLLKSHHLNDIFDLNLKEIANIDGFAELTGQIIVQGLISIADEFNHIYQYGFNLETTILTKDLQTLTHELFDKKIVFTGKMNHSRDDMKKHAKSIGIKVSTSISAKIDYLVIGDKVGQKKIKDAEKFGVVVMTETDYLSKI.

NAD(+) contacts are provided by residues 29-33 (DQDYD) and 73-74 (SI). Lysine 111 (N6-AMP-lysine intermediate) is an active-site residue. NAD(+) is bound by residues arginine 127, glutamate 158, and lysine 270. Zn(2+)-binding residues include cysteine 358, cysteine 361, cysteine 374, and cysteine 380. The BRCT domain maps to 538 to 614 (TLTHELFDKK…MTETDYLSKI (77 aa)).

This sequence belongs to the NAD-dependent DNA ligase family. LigA subfamily. Requires Mg(2+) as cofactor. It depends on Mn(2+) as a cofactor.

It catalyses the reaction NAD(+) + (deoxyribonucleotide)n-3'-hydroxyl + 5'-phospho-(deoxyribonucleotide)m = (deoxyribonucleotide)n+m + AMP + beta-nicotinamide D-nucleotide.. In terms of biological role, DNA ligase that catalyzes the formation of phosphodiester linkages between 5'-phosphoryl and 3'-hydroxyl groups in double-stranded DNA using NAD as a coenzyme and as the energy source for the reaction. It is essential for DNA replication and repair of damaged DNA. This Ruthia magnifica subsp. Calyptogena magnifica protein is DNA ligase.